We begin with the raw amino-acid sequence, 301 residues long: D-alanine--D-alanine ligase (301 aa).

The region spanning 102-295 (KAVFAAAGLP…FPALCAWMVE (194 aa)) is the ATP-grasp domain. Position 128-181 (128-181 (PLPRPYVIKPVNEGSSVGVFILREGDNRRADIARAWRHGSVAMTEEYVPGRELT)) interacts with ATP. Positions 248, 262, and 264 each coordinate Mg(2+).

Belongs to the D-alanine--D-alanine ligase family. It depends on Mg(2+) as a cofactor. Requires Mn(2+) as cofactor.

It localises to the cytoplasm. It carries out the reaction 2 D-alanine + ATP = D-alanyl-D-alanine + ADP + phosphate + H(+). It functions in the pathway cell wall biogenesis; peptidoglycan biosynthesis. Cell wall formation. The polypeptide is D-alanine--D-alanine ligase (Acidiphilium cryptum (strain JF-5)).